Reading from the N-terminus, the 711-residue chain is Quinolinate synthase, chloroplastic (711 aa).

A chloroplast-targeting transit peptide spans 1–41 (MDVSSLAAAAPSLVAPPLHHKPHLAFPPHHPSPARGSIGVR). Residues 17–63 (PLHHKPHLAFPPHHPSPARGSIGVRCAHSPSPHPLRPSAATADEEVS) are disordered. Cys114 (cysteine persulfide intermediate) is an active-site residue. Iminosuccinate is bound by residues His263 and Ser289. Cys343 is a binding site for [4Fe-4S] cluster. Iminosuccinate contacts are provided by residues 372–374 (YIN) and Ser394. Cys467 provides a ligand contact to [4Fe-4S] cluster. Iminosuccinate is bound by residues 493–495 (HFE) and Thr518. Position 631 (Cys631) interacts with [4Fe-4S] cluster.

It belongs to the quinolinate synthase family. Type 1 subfamily. In terms of assembly, homodimer. The cofactor is [4Fe-4S] cluster.

It localises to the plastid. The protein localises to the chloroplast. The enzyme catalyses iminosuccinate + dihydroxyacetone phosphate = quinolinate + phosphate + 2 H2O + H(+). The protein operates within cofactor biosynthesis; NAD(+) biosynthesis; quinolinate from iminoaspartate: step 1/1. Catalyzes the condensation of iminoaspartate with dihydroxyacetone phosphate to form quinolinate. This is Quinolinate synthase, chloroplastic from Oryza sativa subsp. japonica (Rice).